The following is a 116-amino-acid chain: UPF0102 protein ELI_05985 (116 aa).

This sequence belongs to the UPF0102 family.

This chain is UPF0102 protein ELI_05985, found in Erythrobacter litoralis (strain HTCC2594).